The sequence spans 364 residues: Putative agmatine deiminase 1 (364 aa).

Residue C356 is the Amidino-cysteine intermediate of the active site.

This sequence belongs to the agmatine deiminase family.

The catalysed reaction is agmatine + H2O = N-carbamoylputrescine + NH4(+). The sequence is that of Putative agmatine deiminase 1 from Listeria monocytogenes serotype 4b (strain F2365).